Consider the following 400-residue polypeptide: MRGRRGDRMTINIQEHMAINVCPGPIRPIRQISDYFPRGPGPEGGGGGGGEAPAHLVPLALAPPAALLGATTPEDGAEVDSYDSDDATALGTLEFDLLYDRASCTLHCSILRAKGLKPMDFNGLADPYVKLHLLPGACKANKLKTKTQRNTLNPVWNEDLTYSGITDDDITHKVLRIAVCDEDKLSHNEFIGEIRVPLRRLKPSQKKHFNICLERQVPLASPSSMSAALRGISCYLKELEQAEQGQGLLEERGRILLSLSYSSRRRGLLVGILRCAHLAAMDVNGYSDPYVKTYLRPDVDKKSKHKTCVKKKTLNPEFNEEFFYEIELSTLATKTLEVTVWDYDIGKSNDFIGGVSLGPGARGEARKHWSDCLQQPDAALERWHTLTSELPPAAGALSSA.

An interaction with UNC13D and DYNLT1 region spans residues 1 to 89 (MRGRRGDRMT…DSYDSDDATA (89 aa)). 2 C2 domains span residues 89 to 211 (ALGT…HFNI) and 251 to 384 (ERGR…ERWH). Positions 120, 126, 181, 183, 282, 288, 342, 344, and 350 each coordinate Ca(2+). The segment at 215-400 (RQVPLASPSS…PPAAGALSSA (186 aa)) is interaction with UNC13D.

In terms of assembly, interacts (via N-terminus) with UNC13A. Interacts with cytoplasmic dynein light chain DYNLT1. Interacts with UNC13D. It depends on Ca(2+) as a cofactor. As to expression, predominantly expressed in brain. Also expressed in testis.

It is found in the lysosome. Its subcellular location is the cytoplasmic vesicle. The protein resides in the secretory vesicle. It localises to the synaptic vesicle membrane. The protein localises to the synapse. It is found in the synaptosome. Its function is as follows. Calcium sensor which most probably regulates fusion of vesicles with membranes. Binds calcium and phospholipids. May be involved in calcium dependent neurotransmitter release through the interaction with UNC13A. May be involved in calcium-dependent spontaneous release of neurotransmitter in absence of action potentials in neuronal cells. Regulates Ca(2+)-dependent secretory lysosome exocytosis in mast cells. The polypeptide is Double C2-like domain-containing protein alpha (DOC2A) (Homo sapiens (Human)).